The following is a 409-amino-acid chain: Endoglucanase B (409 aa).

The N-terminal stretch at 1–21 (MKLKRIAALLTAAVMSVGVMA) is a signal peptide. The tract at residues 23-66 (CGGSKSDDKSKADTKSAAETSGAEGDSSESEEIPVSQTHTNDPM) is disordered. The segment covering 27-38 (KSDDKSKADTKS) has biased composition (basic and acidic residues). The segment covering 57 to 66 (VSQTHTNDPM) has biased composition (polar residues). Glu212 serves as the catalytic Proton donor. Glu332 (nucleophile) is an active-site residue.

Belongs to the glycosyl hydrolase 5 (cellulase A) family.

The catalysed reaction is Endohydrolysis of (1-&gt;4)-beta-D-glucosidic linkages in cellulose, lichenin and cereal beta-D-glucans.. The protein is Endoglucanase B (celB) of Ruminococcus albus.